A 250-amino-acid chain; its full sequence is Phosphoribosylaminoimidazole-succinocarboxamide synthase (250 aa).

The protein belongs to the SAICAR synthetase family.

The enzyme catalyses 5-amino-1-(5-phospho-D-ribosyl)imidazole-4-carboxylate + L-aspartate + ATP = (2S)-2-[5-amino-1-(5-phospho-beta-D-ribosyl)imidazole-4-carboxamido]succinate + ADP + phosphate + 2 H(+). It functions in the pathway purine metabolism; IMP biosynthesis via de novo pathway; 5-amino-1-(5-phospho-D-ribosyl)imidazole-4-carboxamide from 5-amino-1-(5-phospho-D-ribosyl)imidazole-4-carboxylate: step 1/2. The polypeptide is Phosphoribosylaminoimidazole-succinocarboxamide synthase (Picosynechococcus sp. (strain ATCC 27264 / PCC 7002 / PR-6) (Agmenellum quadruplicatum)).